The sequence spans 147 residues: uncharacterized protein (147 aa).

Positions 1–137 (MRDNTIGSLI…LYELMTKVHK (137 aa)) constitute an HTH marR-type domain. The segment at residues 53-76 (QMELAEKVTVTQGGISRMLTRLEK) is a DNA-binding region (H-T-H motif).

This is an uncharacterized protein from Bacillus anthracis.